A 74-amino-acid polypeptide reads, in one-letter code: UPF0346 protein BPUM_1890 (74 aa).

This sequence belongs to the UPF0346 family.

The protein is UPF0346 protein BPUM_1890 of Bacillus pumilus (strain SAFR-032).